The chain runs to 329 residues: Cathepsin K (329 aa).

Residues 1–15 form the signal peptide; sequence MWVFKFLLLPVVSFA. The propeptide at 16–114 is activation peptide; that stretch reads LSPEETLDTQ…TLYTPEWEGR (99 aa). Asparagine 103 is a glycosylation site (N-linked (GlcNAc...) asparagine). Disulfide bonds link cysteine 136–cysteine 177 and cysteine 170–cysteine 210. The active site involves cysteine 139. N-linked (GlcNAc...) asparagine glycosylation is present at asparagine 213. Cysteine 269 and cysteine 318 are joined by a disulfide. Active-site residues include histidine 276 and asparagine 296.

This sequence belongs to the peptidase C1 family.

The protein resides in the lysosome. Its subcellular location is the secreted. It is found in the apical cell membrane. The catalysed reaction is Broad proteolytic activity. With small-molecule substrates and inhibitors, the major determinant of specificity is P2, which is preferably Leu, Met &gt; Phe, and not Arg.. Thiol protease involved in osteoclastic bone resorption and may participate partially in the disorder of bone remodeling. Displays potent endoprotease activity against fibrinogen at acid pH. May play an important role in extracellular matrix degradation. Involved in the release of thyroid hormone thyroxine (T4) by limited proteolysis of TG/thyroglobulin in the thyroid follicle lumen. The protein is Cathepsin K (Ctsk) of Rattus norvegicus (Rat).